The chain runs to 121 residues: Large ribosomal subunit protein uL14c (121 aa).

Belongs to the universal ribosomal protein uL14 family. Part of the 50S ribosomal subunit.

Its subcellular location is the plastid. The protein resides in the chloroplast. Its function is as follows. Binds to 23S rRNA. The sequence is that of Large ribosomal subunit protein uL14c from Oedogonium cardiacum (Filamentous green alga).